The chain runs to 718 residues: Putative proline-rich receptor-like protein kinase PERK11 (718 aa).

Positions 1-256 (MDKVQQQADL…GGTSQQSNES (256 aa)) are disordered. Residues 1 to 262 (MDKVQQQADL…SNESNYTEKT (262 aa)) are Extracellular-facing. 3 stretches are compositionally biased toward pro residues: residues 45 to 105 (ATSP…PPQS), 115 to 132 (IPFP…PPPS), and 157 to 167 (LPSPPSTPFSP). Composition is skewed to low complexity over residues 168 to 203 (PSQE…LQPL) and 211 to 244 (SNRV…ANSN). Residues Asn231, Asn254, and Asn257 are each glycosylated (N-linked (GlcNAc...) asparagine). A helical transmembrane segment spans residues 263–283 (VIGIGIAGVLVILFIAGVFFV). The Cytoplasmic segment spans residues 284–718 (RRKQKKGSSS…RAFNTSHRNH (435 aa)). A disordered region spans residues 314-348 (HYRQKPGNGNSSAQNSSPDTNSLGNPKHGRGTPDS). Residues 320–337 (GNGNSSAQNSSPDTNSLG) show a composition bias toward polar residues. At Thr359 the chain carries Phosphothreonine. A Protein kinase domain is found at 370 to 649 (FCKSFVVGEG…VRALDTRDDL (280 aa)). ATP-binding positions include 376–384 (VGEGGFGCV) and Lys398. Tyr443 carries the phosphotyrosine modification. Catalysis depends on Asp494, which acts as the Proton acceptor. 2 positions are modified to phosphoserine: Ser498 and Ser527. Residues Thr528 and Thr533 each carry the phosphothreonine modification. Residue Tyr541 is modified to Phosphotyrosine. The tract at residues 683–718 (SSDLGTNTGYYPSQDYATSHEYESESRAFNTSHRNH) is disordered. 2 stretches are compositionally biased toward polar residues: residues 685 to 699 (DLGT…QDYA) and 709 to 718 (RAFNTSHRNH).

It belongs to the protein kinase superfamily. Ser/Thr protein kinase family. As to expression, mostly expressed in flower buds.

Its subcellular location is the cell membrane. It catalyses the reaction L-seryl-[protein] + ATP = O-phospho-L-seryl-[protein] + ADP + H(+). It carries out the reaction L-threonyl-[protein] + ATP = O-phospho-L-threonyl-[protein] + ADP + H(+). The protein is Putative proline-rich receptor-like protein kinase PERK11 (PERK11) of Arabidopsis thaliana (Mouse-ear cress).